The chain runs to 209 residues: Uracil phosphoribosyltransferase (209 aa).

5-phospho-alpha-D-ribose 1-diphosphate contacts are provided by residues arginine 79, arginine 104, and 131-139 (DPMLATGAS). Residues isoleucine 194 and 199-201 (GDA) contribute to the uracil site. Aspartate 200 is a binding site for 5-phospho-alpha-D-ribose 1-diphosphate.

It belongs to the UPRTase family. Mg(2+) is required as a cofactor.

It catalyses the reaction UMP + diphosphate = 5-phospho-alpha-D-ribose 1-diphosphate + uracil. Its pathway is pyrimidine metabolism; UMP biosynthesis via salvage pathway; UMP from uracil: step 1/1. Its activity is regulated as follows. Allosterically activated by GTP. Its function is as follows. Catalyzes the conversion of uracil and 5-phospho-alpha-D-ribose 1-diphosphate (PRPP) to UMP and diphosphate. This is Uracil phosphoribosyltransferase from Staphylococcus carnosus (strain TM300).